A 205-amino-acid polypeptide reads, in one-letter code: Small ribosomal subunit protein uS4 (205 aa).

The span at 1–12 (MSKRIQAKHKLD) shows a compositional bias: basic residues. The disordered stretch occupies residues 1–49 (MSKRIQAKHKLDRRMGQNIWGRPKSPVNRREYGPGQHGQRRKGKMSDFG). The S4 RNA-binding domain maps to 94 to 155 (RRLDAVVYRA…SSRQLEIVIV (62 aa)).

Belongs to the universal ribosomal protein uS4 family. Part of the 30S ribosomal subunit. Contacts protein S5. The interaction surface between S4 and S5 is involved in control of translational fidelity.

One of the primary rRNA binding proteins, it binds directly to 16S rRNA where it nucleates assembly of the body of the 30S subunit. In terms of biological role, with S5 and S12 plays an important role in translational accuracy. This Methylobacterium radiotolerans (strain ATCC 27329 / DSM 1819 / JCM 2831 / NBRC 15690 / NCIMB 10815 / 0-1) protein is Small ribosomal subunit protein uS4.